The following is a 164-amino-acid chain: Transcription elongation factor GreA (164 aa).

Belongs to the GreA/GreB family.

Its function is as follows. Necessary for efficient RNA polymerase transcription elongation past template-encoded arresting sites. The arresting sites in DNA have the property of trapping a certain fraction of elongating RNA polymerases that pass through, resulting in locked ternary complexes. Cleavage of the nascent transcript by cleavage factors such as GreA or GreB allows the resumption of elongation from the new 3'terminus. GreA releases sequences of 2 to 3 nucleotides. The sequence is that of Transcription elongation factor GreA from Helicobacter pylori (strain P12).